The sequence spans 293 residues: 4-diphosphocytidyl-2-C-methyl-D-erythritol kinase (293 aa).

K10 is a catalytic residue. 96–106 (PVASGIGGGSS) lines the ATP pocket. D138 is an active-site residue.

This sequence belongs to the GHMP kinase family. IspE subfamily.

The catalysed reaction is 4-CDP-2-C-methyl-D-erythritol + ATP = 4-CDP-2-C-methyl-D-erythritol 2-phosphate + ADP + H(+). It participates in isoprenoid biosynthesis; isopentenyl diphosphate biosynthesis via DXP pathway; isopentenyl diphosphate from 1-deoxy-D-xylulose 5-phosphate: step 3/6. Catalyzes the phosphorylation of the position 2 hydroxy group of 4-diphosphocytidyl-2C-methyl-D-erythritol. The sequence is that of 4-diphosphocytidyl-2-C-methyl-D-erythritol kinase from Chelativorans sp. (strain BNC1).